The chain runs to 675 residues: DNA ligase (675 aa).

NAD(+)-binding positions include 35 to 39 (DAVYD), 84 to 85 (SL), and Glu118. The active-site N6-AMP-lysine intermediate is Lys120. The NAD(+) site is built by Arg141, Glu178, Lys295, and Lys319. Cys413, Cys416, Cys431, and Cys436 together coordinate Zn(2+). The 78-residue stretch at 598-675 (GAIGALTGQT…DEAELKALLS (78 aa)) folds into the BRCT domain.

This sequence belongs to the NAD-dependent DNA ligase family. LigA subfamily. It depends on Mg(2+) as a cofactor. Mn(2+) serves as cofactor.

It carries out the reaction NAD(+) + (deoxyribonucleotide)n-3'-hydroxyl + 5'-phospho-(deoxyribonucleotide)m = (deoxyribonucleotide)n+m + AMP + beta-nicotinamide D-nucleotide.. DNA ligase that catalyzes the formation of phosphodiester linkages between 5'-phosphoryl and 3'-hydroxyl groups in double-stranded DNA using NAD as a coenzyme and as the energy source for the reaction. It is essential for DNA replication and repair of damaged DNA. This Synechococcus sp. (strain RCC307) protein is DNA ligase.